The chain runs to 314 residues: tRNA dimethylallyltransferase (314 aa).

Position 11-18 (11-18 (GPTAVGKT)) interacts with ATP. 13-18 (TAVGKT) is a substrate binding site. Residues 36–39 (DSMQ) form an interaction with substrate tRNA region.

Belongs to the IPP transferase family. In terms of assembly, monomer. It depends on Mg(2+) as a cofactor.

It carries out the reaction adenosine(37) in tRNA + dimethylallyl diphosphate = N(6)-dimethylallyladenosine(37) in tRNA + diphosphate. In terms of biological role, catalyzes the transfer of a dimethylallyl group onto the adenine at position 37 in tRNAs that read codons beginning with uridine, leading to the formation of N6-(dimethylallyl)adenosine (i(6)A). This Bacillus anthracis protein is tRNA dimethylallyltransferase.